Consider the following 853-residue polypeptide: DNA mismatch repair protein MutS (853 aa).

ATP is bound at residue 614–621 (GPNMGGKS).

The protein belongs to the DNA mismatch repair MutS family.

Functionally, this protein is involved in the repair of mismatches in DNA. It is possible that it carries out the mismatch recognition step. This protein has a weak ATPase activity. This chain is DNA mismatch repair protein MutS, found in Escherichia coli (strain K12 / MC4100 / BW2952).